The chain runs to 128 residues: MNLIAKLEQEEIARALGEKTIPEFAPGDTVIVSVNVVEGTRKRVQAYEGVVIAKRNRGLNSSFIVRKISSGEGVERTFQTYSPLLASIVVKRRGDVRRAKLYYLRDRSGKSARIKEKLVSKGRAASQA.

This sequence belongs to the bacterial ribosomal protein bL19 family.

Its function is as follows. This protein is located at the 30S-50S ribosomal subunit interface and may play a role in the structure and function of the aminoacyl-tRNA binding site. The protein is Large ribosomal subunit protein bL19 of Paraburkholderia xenovorans (strain LB400).